We begin with the raw amino-acid sequence, 235 residues long: Ubiquinone biosynthesis O-methyltransferase (235 aa).

The S-adenosyl-L-methionine site is built by arginine 36, glycine 56, aspartate 77, and methionine 122.

The protein belongs to the methyltransferase superfamily. UbiG/COQ3 family.

It carries out the reaction a 3-demethylubiquinol + S-adenosyl-L-methionine = a ubiquinol + S-adenosyl-L-homocysteine + H(+). The enzyme catalyses a 3-(all-trans-polyprenyl)benzene-1,2-diol + S-adenosyl-L-methionine = a 2-methoxy-6-(all-trans-polyprenyl)phenol + S-adenosyl-L-homocysteine + H(+). It participates in cofactor biosynthesis; ubiquinone biosynthesis. O-methyltransferase that catalyzes the 2 O-methylation steps in the ubiquinone biosynthetic pathway. In Leptothrix cholodnii (strain ATCC 51168 / LMG 8142 / SP-6) (Leptothrix discophora (strain SP-6)), this protein is Ubiquinone biosynthesis O-methyltransferase.